Reading from the N-terminus, the 101-residue chain is MISLGHLLVLGAALFCISLAGIFLNRKNVIVLLMSIELMLLAVNVNFIAFSRQLGDTAGQLFVFFILTVAAAEAAIGLAILVTLFRTRHTINVAEVDALKG.

Helical transmembrane passes span leucine 4 to leucine 24, isoleucine 30 to phenylalanine 50, and phenylalanine 62 to valine 82.

It belongs to the complex I subunit 4L family. In terms of assembly, NDH-1 is composed of 14 different subunits. Subunits NuoA, H, J, K, L, M, N constitute the membrane sector of the complex.

The protein resides in the cell inner membrane. The catalysed reaction is a quinone + NADH + 5 H(+)(in) = a quinol + NAD(+) + 4 H(+)(out). In terms of biological role, NDH-1 shuttles electrons from NADH, via FMN and iron-sulfur (Fe-S) centers, to quinones in the respiratory chain. The immediate electron acceptor for the enzyme in this species is believed to be ubiquinone. Couples the redox reaction to proton translocation (for every two electrons transferred, four hydrogen ions are translocated across the cytoplasmic membrane), and thus conserves the redox energy in a proton gradient. In Xylella fastidiosa (strain 9a5c), this protein is NADH-quinone oxidoreductase subunit K.